Reading from the N-terminus, the 92-residue chain is Long neurotoxin 3FTx-Oxy1 (92 aa).

Positions Met1–Thr21 are cleaved as a signal peptide. 5 cysteine pairs are disulfide-bonded: Cys24/Cys42, Cys35/Cys63, Cys48/Cys52, Cys67/Cys79, and Cys80/Cys85.

The protein belongs to the three-finger toxin family. Long-chain subfamily. Type II alpha-neurotoxin sub-subfamily. In terms of tissue distribution, expressed by the venom gland.

The protein resides in the secreted. Functionally, binds with high affinity to muscular (alpha-1/CHRNA1) and neuronal (alpha-7/CHRNA7) nicotinic acetylcholine receptor (nAChR) and inhibits acetylcholine from binding to the receptor, thereby impairing neuromuscular and neuronal transmission. This chain is Long neurotoxin 3FTx-Oxy1, found in Oxyuranus microlepidotus (Inland taipan).